Here is a 205-residue protein sequence, read N- to C-terminus: Thymidine kinase (205 aa).

ATP contacts are provided by residues 9–16 and 87–90; these read SAMNAGKS and DECQ. Glutamate 88 (proton acceptor) is an active-site residue. The Zn(2+) site is built by cysteine 145, cysteine 147, cysteine 182, and histidine 185.

Belongs to the thymidine kinase family. In terms of assembly, homotetramer.

The protein localises to the cytoplasm. It carries out the reaction thymidine + ATP = dTMP + ADP + H(+). Its activity is regulated as follows. Allosteric enzyme which is feedback inhibited by dTTP and activated by a number of dNDP and dNTP. Phosphorylates both thymidine and deoxyuridine. The protein is Thymidine kinase of Escherichia coli (strain K12).